We begin with the raw amino-acid sequence, 1506 residues long: Gag-Pol polyprotein (1506 aa).

CCHC-type zinc fingers lie at residues 385-402 (QKCY…QCRQ) and 404-421 (IICH…DCRQ). Residues 459 to 530 (KKLLVDTGAD…SPVEVLGRDN (72 aa)) enclose the Peptidase A2 domain. Asp-464 functions as the Protease; shared with dimeric partner in the catalytic mechanism. The Reverse transcriptase domain maps to 587–776 (EGKVGRAPPH…YPAKWLGFEL (190 aa)). Mg(2+) contacts are provided by Asp-652, Asp-727, Asp-728, Asp-980, Glu-1012, Asp-1032, and Asp-1085. One can recognise an RNase H type-1 domain in the interval 971-1093 (LVPGPTYYTD…IDRYISEIFL (123 aa)). The Integrase-type zinc finger occupies 1228–1269 (ENIPLAEEEHNKWHQDAVSLHLEFGIPRTAAEDIVQQCDVCQ). Residues His-1237, His-1241, Cys-1265, and Cys-1268 each coordinate Zn(2+). The 161-residue stretch at 1270–1430 (ENKMPSTLRG…SPMDIFIFNK (161 aa)) folds into the Integrase catalytic domain. Mg(2+) contacts are provided by Asp-1291, Asp-1343, and Glu-1379. Residues 1447 to 1499 (RFCYYRTRKRGHPGEWQGPTQVLWGGDGAIVVKDRGTDRYLVIANKDVKFIPP) constitute a DNA-binding region (integrase-type).

This sequence belongs to the retroviral Pol polyprotein family. As to quaternary structure, homotetramer; further associates as a homohexadecamer. It depends on Mg(2+) as a cofactor. Specific enzymatic cleavages by the viral protease yield mature proteins.

The protein localises to the virion. The enzyme catalyses Endonucleolytic cleavage to 5'-phosphomonoester.. It catalyses the reaction 3'-end directed exonucleolytic cleavage of viral RNA-DNA hybrid.. It carries out the reaction dUTP + H2O = dUMP + diphosphate + H(+). The catalysed reaction is DNA(n) + a 2'-deoxyribonucleoside 5'-triphosphate = DNA(n+1) + diphosphate. Its function is as follows. Mediates, with Gag polyprotein, the essential events in virion assembly, including binding the plasma membrane, making the protein-protein interactions necessary to create spherical particles, recruiting the viral Env proteins, and packaging the genomic RNA via direct interactions with the RNA packaging sequence. Targets the polyprotein to the plasma membrane. Functionally, forms the core that encapsulates the genomic RNA-nucleocapsid complex in the virion. In terms of biological role, encapsulates and protects viral dimeric unspliced genomic RNA (gRNA). Binds these RNAs through its zinc fingers. Acts as a nucleic acid chaperone which is involved in rearrangement of nucleic acid secondary structure during gRNA retrotranscription. Also facilitates template switch leading to recombination. Its function is as follows. The aspartyl protease mediates proteolytic cleavages of Gag and Gag-Pol polyproteins during or shortly after the release of the virion from the plasma membrane. Cleavages take place as an ordered, step-wise cascade to yield mature proteins. This process is called maturation. Displays maximal activity during the budding process just prior to particle release from the cell. RT is a multifunctional enzyme that converts the viral dimeric RNA genome into dsDNA in the cytoplasm, shortly after virus entry into the cell. This enzyme displays a DNA polymerase activity that can copy either DNA or RNA templates, and a ribonuclease H (RNase H) activity that cleaves the RNA strand of RNA-DNA heteroduplexes in a partially processive 3' to 5' endonucleasic mode. Conversion of viral genomic RNA into dsDNA requires many steps. A tRNA-Trp binds to the primer-binding site (PBS) situated at the 5' end of the viral RNA. RT uses the 3' end of the tRNA primer to perfom a short round of RNA-dependent minus-strand DNA synthesis. The reading proceeds through the U5 region and ends after the repeated (R) region which is present at both ends of viral RNA. The portion of the RNA-DNA heteroduplex is digested by the RNase H, resulting in a ssDNA product attached to the tRNA primer. This ssDNA/tRNA hybridizes with the identical R region situated at the 3' end of viral RNA. This template exchange, known as minus-strand DNA strong stop transfer, can be either intra- or intermolecular. RT uses the 3' end of this newly synthesized short ssDNA to perfom the RNA-dependent minus-strand DNA synthesis of the whole template. RNase H digests the RNA template except for a polypurine tract (PPT) situated at the 5' end of the genome. It is not clear if both polymerase and RNase H activities are simultaneous. RNase H probably can proceed both in a polymerase-dependent (RNA cut into small fragments by the same RT performing DNA synthesis) and a polymerase-independent mode (cleavage of remaining RNA fragments by free RTs). Secondly, RT performs DNA-directed plus-strand DNA synthesis using the PPT that has not been removed by RNase H as primers. PPT and tRNA primers are then removed by RNase H. The 3' and 5' ssDNA PBS regions hybridize to form a circular dsDNA intermediate. Strand displacement synthesis by RT to the PBS and PPT ends produces a blunt ended, linear dsDNA copy of the viral genome that includes long terminal repeats (LTRs) at both ends. Functionally, catalyzes viral DNA integration into the host chromosome, by performing a series of DNA cutting and joining reactions. The protein is Gag-Pol polyprotein (pol) of Ovis aries (Sheep).